The sequence spans 192 residues: Ras-like protein 2 (192 aa).

Residue 12–19 (GGGGVGKS) participates in GTP binding. Positions 34-42 (YDPTIEDSY) match the Effector region motif. C46 carries S-palmitoyl cysteine lipidation. GTP is bound by residues 59–63 (DTAGQ) and 118–121 (NKCD). S-palmitoyl cysteine attachment occurs at residues C120 and C147. At C189 the chain carries Cysteine methyl ester. C189 is lipidated: S-farnesyl cysteine. The propeptide at 190–192 (CLM) is removed in mature form.

It belongs to the small GTPase superfamily. Ras family. Interacts with hzg.

The protein localises to the cell membrane. The enzyme catalyses GTP + H2O = GDP + phosphate + H(+). Alternates between an inactive form bound to GDP and an active form bound to GTP. Activated by a guanine nucleotide-exchange factor (GEF) and inactivated by a GTPase-activating protein (GAP). In terms of biological role, may be involved in endocytic processes and/or other transport pathways mediated by vesicle trafficking. May interact functionally with ROP protein. Ras proteins bind GDP/GTP and possess intrinsic GTPase activity. This Drosophila melanogaster (Fruit fly) protein is Ras-like protein 2 (Ras64B).